Consider the following 397-residue polypeptide: LIM/homeobox protein Lhx3 (397 aa).

LIM zinc-binding domains are found at residues 31 to 81 (CAGC…CKDD) and 90 to 144 (CAAC…CKAD). At Thr-63 the chain carries Phosphothreonine. At Ser-71 the chain carries Phosphoserine. Positions 157–216 (AKRPRTTITAKQLETLKSAYNTSPKPARHVREQLSSETGLDMRVVQVWFQNRRAKEKRLK) form a DNA-binding region, homeobox. The disordered stretch occupies residues 212-397 (EKRLKKDAGR…WLDEVDHAQF (186 aa)). The residue at position 227 (Tyr-227) is a Phosphotyrosine. Phosphoserine is present on residues Ser-234 and Ser-238. Residues 316–331 (GVPPSPAAPQSLPGPQ) show a composition bias toward pro residues.

In terms of assembly, interacts with POU1F1. At neuronal promoters, interacts with LDB1, in motor neurons LDB1 is displaced by ISL1 and a ternary complex is formed in which ISL1 contacts both LHX3 and LDB1; allosteric structural changes in the DNA binding domain of LHX3, induced by the ISL1-LHX3 interaction, may explain differences in sequence specificity of the different complexes. Interacts with LDB2. May interact with CITED2/MRG1.

The protein localises to the nucleus. Transcription factor. Recognizes and binds to the consensus sequence motif 5'-AATTAATTA-3' in the regulatory elements of target genes, such as glycoprotein hormones alpha chain CGA and visual system homeobox CHX10, positively modulating transcription; transcription can be co-activated by LDB2. Synergistically enhances transcription from the prolactin promoter in cooperation with POU1F1/Pit-1. Required for the establishment of the specialized cells of the pituitary gland and the nervous system. Involved in the development of interneurons and motor neurons in cooperation with LDB1 and ISL1. In Homo sapiens (Human), this protein is LIM/homeobox protein Lhx3 (LHX3).